Consider the following 784-residue polypeptide: Probable phosphoketolase (784 aa).

This sequence belongs to the XFP family. The cofactor is thiamine diphosphate.

In Rhodopseudomonas palustris (strain HaA2), this protein is Probable phosphoketolase.